The following is a 312-amino-acid chain: Homoserine O-succinyltransferase (312 aa).

C142 (acyl-thioester intermediate) is an active-site residue. 2 residues coordinate substrate: K163 and S192. The active-site Proton acceptor is H235. E237 is a catalytic residue. R249 provides a ligand contact to substrate.

This sequence belongs to the MetA family.

It localises to the cytoplasm. It carries out the reaction L-homoserine + succinyl-CoA = O-succinyl-L-homoserine + CoA. It participates in amino-acid biosynthesis; L-methionine biosynthesis via de novo pathway; O-succinyl-L-homoserine from L-homoserine: step 1/1. Transfers a succinyl group from succinyl-CoA to L-homoserine, forming succinyl-L-homoserine. The protein is Homoserine O-succinyltransferase of Shewanella halifaxensis (strain HAW-EB4).